Reading from the N-terminus, the 507-residue chain is 2,3-bisphosphoglycerate-independent phosphoglycerate mutase (507 aa).

Positions 13 and 63 each coordinate Mn(2+). Ser-63 acts as the Phosphoserine intermediate in catalysis. Residues His-122, 152 to 153 (RD), Arg-184, Arg-190, 256 to 259 (RADR), and Lys-330 contribute to the substrate site. Mn(2+)-binding residues include Asp-397, His-401, Asp-438, His-439, and His-457.

It belongs to the BPG-independent phosphoglycerate mutase family. As to quaternary structure, monomer. The cofactor is Mn(2+).

The catalysed reaction is (2R)-2-phosphoglycerate = (2R)-3-phosphoglycerate. The protein operates within carbohydrate degradation; glycolysis; pyruvate from D-glyceraldehyde 3-phosphate: step 3/5. Catalyzes the interconversion of 2-phosphoglycerate and 3-phosphoglycerate. In Chromobacterium violaceum (strain ATCC 12472 / DSM 30191 / JCM 1249 / CCUG 213 / NBRC 12614 / NCIMB 9131 / NCTC 9757 / MK), this protein is 2,3-bisphosphoglycerate-independent phosphoglycerate mutase.